A 211-amino-acid chain; its full sequence is Thymidylate kinase (211 aa).

11-18 is a binding site for ATP; that stretch reads GPDGAGKT.

It belongs to the thymidylate kinase family.

It catalyses the reaction dTMP + ATP = dTDP + ADP. Phosphorylation of dTMP to form dTDP in both de novo and salvage pathways of dTTP synthesis. The polypeptide is Thymidylate kinase (Streptococcus pyogenes serotype M6 (strain ATCC BAA-946 / MGAS10394)).